We begin with the raw amino-acid sequence, 102 residues long: Noncompact myelin-associated protein (102 aa).

Residues 1–30 (MTTATPLGDTTFFSLNMTTRGEDFLYKSSG) lie on the Extracellular side of the membrane. Residues 31-51 (AIVAAVVVVVIIIFTVVLILL) traverse the membrane as a helical segment. The Cytoplasmic segment spans residues 52–102 (KMYNRKMRTRRELEPKGPKPTAPSAVGPNSNGSQHPATVTFSPVDVQVETR). A disordered region spans residues 60-102 (TRRELEPKGPKPTAPSAVGPNSNGSQHPATVTFSPVDVQVETR). Over residues 78 to 92 (GPNSNGSQHPATVTF) the composition is skewed to polar residues.

Post-translationally, glycosylated.

It localises to the cell membrane. In terms of biological role, plays a role in myelin formation. This Homo sapiens (Human) protein is Noncompact myelin-associated protein (NCMAP).